The chain runs to 247 residues: ATP synthase subunit a, chloroplastic (247 aa).

5 helical membrane-spanning segments follow: residues 38–58 (QVLI…ILVV), 95–115 (VPFI…GALL), 134–154 (INTT…AGIS), 199–219 (LVVV…VMFL), and 220–240 (GLFT…AYIG).

The protein belongs to the ATPase A chain family. In terms of assembly, F-type ATPases have 2 components, CF(1) - the catalytic core - and CF(0) - the membrane proton channel. CF(1) has five subunits: alpha(3), beta(3), gamma(1), delta(1), epsilon(1). CF(0) has four main subunits: a, b, b' and c.

The protein localises to the plastid. It is found in the chloroplast thylakoid membrane. Key component of the proton channel; it plays a direct role in the translocation of protons across the membrane. The polypeptide is ATP synthase subunit a, chloroplastic (Cicer arietinum (Chickpea)).